The following is a 646-amino-acid chain: MQPAALLGLLGATVVAAVSSMPVDIRNHNEEVVTHCIIEVLSNALLKSSAPPITPECRQVLKKNGKELKNEEKSENENTRFEVRLLRDPADTSEAPGLSSREDSGEGDAQVPTVADTESGGHSRERAGEPPGSQVAKEAKTRYSKSEGQNREEEMVKYQKRERGEVGSEERLSEGPGKAQTAFLNQRNQTPAKKEELVSRYDTQSARGLEKSHSRERSSQESGEETKSQENWPQELQRHPEGQEAPGESEEDASPEVDKRHSRPRHHHGRSRPDRSSQEGNPPLEEESHVGTGNSDEEKARHPAHFRALEEGAEYGEEVRRHSAAQAPGDLQGARFGGRGRGEHQALRRPSEESLEQENKRHGLSPDLNMAQGYSEESEEERGPAPGPSYRARGGEAAAYSTLGQTDEKRFLGETHHRVQESQRDKARRRLPGELRNYLDYGEEKGEEAARGKWQPQGDPRDADENREEARLRGKQYAPHHITEKRLGELLNPFYDPSQWKSSRFERKDPMDDSFLEGEEENGLTLNEKNFFPEYNYDWWEKKPFEEDVNWGYEKRNPVPKLDLKRQYDRVAELDQLLHYRKKSAEFPDFYDSEEQMSPQHTAENEEEKAGQGVLTEEEEKELENLAAMDLELQKIAEKFSGTRRG.

The first 20 residues, 1-20, serve as a signal peptide directing secretion; sequence MQPAALLGLLGATVVAAVSS. An intrachain disulfide couples C36 to C57. Over residues 67-90 the composition is skewed to basic and acidic residues; the sequence is ELKNEEKSENENTRFEVRLLRDPA. The interval 67 to 483 is disordered; the sequence is ELKNEEKSEN…GKQYAPHHIT (417 aa). S74 is modified (phosphoserine). Phosphothreonine is present on residues T79 and T92. 4 positions are modified to phosphoserine: S93, S99, S100, and S104. A glycan (O-linked (Xyl...) (chondroitin sulfate) serine) is linked at S93. The O-linked (GalNAc...) threonine glycan is linked to T113. Basic and acidic residues-rich tracts occupy residues 119–128 and 137–173; these read SGGHSRERAG and KEAK…ERLS. Phosphoserine occurs at positions 123, 146, and 168. Over residues 182–191 the composition is skewed to polar residues; the sequence is AFLNQRNQTP. The O-linked (GalNAc...) threonine glycan is linked to T190. S205 is subject to Phosphoserine. A compositionally biased stretch (basic and acidic residues) spans 208-228; that stretch reads GLEKSHSRERSSQESGEETKS. O-linked (Xyl...) (chondroitin sulfate) serine glycosylation is present at S222. A compositionally biased stretch (basic residues) spans 260–270; it reads RHSRPRHHHGR. Phosphoserine is present on residues S276, S277, and S295. Y315 carries the post-translational modification Sulfotyrosine. A compositionally biased stretch (basic and acidic residues) spans 340–361; it reads GRGEHQALRRPSEESLEQENKR. S351 and S354 each carry phosphoserine. The residue at position 374 (Y374) is a Phosphotyrosine. Residues S375 and S378 each carry the phosphoserine modification. Positions 406-425 are enriched in basic and acidic residues; it reads TDEKRFLGETHHRVQESQRD. A Sulfotyrosine modification is found at Y441. Basic and acidic residues-rich tracts occupy residues 442–451 and 459–472; these read GEEKGEEAAR and DPRD…EARL. Pyrrolidone carboxylic acid; in secretogranin-1(476-566) is present on Q476. A phosphoserine mark is found at S502, S503, and S514. Sulfotyrosine is present on Y535. Q567 carries the post-translational modification Pyrrolidone carboxylic acid; in peptide BAM-1745. Residue S584 is modified to Phosphoserine. The tract at residues 588–620 is disordered; the sequence is PDFYDSEEQMSPQHTAENEEEKAGQGVLTEEEE. Y591 is modified (sulfotyrosine). S593 and S598 each carry phosphoserine. Q634 bears the Pyrrolidone carboxylic acid; in Secretolytin; partial mark.

It belongs to the chromogranin/secretogranin protein family. Interacts with ITPR1 in the secretory granules. Post-translationally, O-glycosylated by the trisaccharide, GalNAc-Gal-NeuAc, on 2 sites in the N-terminal. May be glycated. In terms of processing, extensively phosphorylated. Differentially processed on numerous sites throughout the sequence depending on tissue type.

The protein resides in the cytoplasmic vesicle. It is found in the secretory vesicle membrane. The protein localises to the secreted. Secretogranin-1 is a neuroendocrine secretory granule protein, which may be the precursor for other biologically active peptides. The 16 pairs of basic AA distributed throughout its sequence may be used as proteolytic cleavage sites. Functionally, secretolytin has antibacterial activity. The polypeptide is Secretogranin-1 (CHGB) (Bos taurus (Bovine)).